Consider the following 178-residue polypeptide: Cytochrome b6-f complex iron-sulfur subunit (178 aa).

Residues 20–42 traverse the membrane as a helical segment; that stretch reads LLTFGSVTGVALGSLYPVVKYFI. A Rieske domain is found at 68–161; it reads WLANHSDGDR…IAVENDNVFV (94 aa). The [2Fe-2S] cluster site is built by Cys-107, His-109, Cys-125, and His-128. A disulfide bridge links Cys-112 with Cys-127.

Belongs to the Rieske iron-sulfur protein family. In terms of assembly, the 4 large subunits of the cytochrome b6-f complex are cytochrome b6, subunit IV (17 kDa polypeptide, PetD), cytochrome f and the Rieske protein, while the 4 small subunits are PetG, PetL, PetM and PetN. The complex functions as a dimer. The cofactor is [2Fe-2S] cluster.

The protein resides in the cellular thylakoid membrane. The catalysed reaction is 2 oxidized [plastocyanin] + a plastoquinol + 2 H(+)(in) = 2 reduced [plastocyanin] + a plastoquinone + 4 H(+)(out). Component of the cytochrome b6-f complex, which mediates electron transfer between photosystem II (PSII) and photosystem I (PSI), cyclic electron flow around PSI, and state transitions. In Prochlorococcus marinus (strain MIT 9303), this protein is Cytochrome b6-f complex iron-sulfur subunit.